The sequence spans 177 residues: Large ribosomal subunit protein uL6 (177 aa).

This sequence belongs to the universal ribosomal protein uL6 family. Part of the 50S ribosomal subunit.

This protein binds to the 23S rRNA, and is important in its secondary structure. It is located near the subunit interface in the base of the L7/L12 stalk, and near the tRNA binding site of the peptidyltransferase center. This is Large ribosomal subunit protein uL6 from Magnetococcus marinus (strain ATCC BAA-1437 / JCM 17883 / MC-1).